The chain runs to 410 residues: Neuroserpin (410 aa).

An N-terminal signal peptide occupies residues 1-16; it reads MAFLGLFSLLVLQSMA. 3 N-linked (GlcNAc...) asparagine glycosylation sites follow: asparagine 157, asparagine 321, and asparagine 401. An O-linked (Xyl...) (chondroitin sulfate) serine glycan is attached at serine 403.

The protein belongs to the serpin family. In terms of assembly, monomer. Has a tendency to form large polymers already at 41 and 45 degrees Celsius (in vitro). As to expression, detected in brain cortex and hippocampus pyramidal neurons (at protein level). Detected in cerebrospinal fluid (at protein level). Predominantly expressed in the brain.

The protein resides in the secreted. It localises to the cytoplasmic vesicle. Its subcellular location is the secretory vesicle lumen. The protein localises to the perikaryon. In terms of biological role, serine protease inhibitor that inhibits plasminogen activators and plasmin but not thrombin. May be involved in the formation or reorganization of synaptic connections as well as for synaptic plasticity in the adult nervous system. May protect neurons from cell damage by tissue-type plasminogen activator. The protein is Neuroserpin (SERPINI1) of Homo sapiens (Human).